The chain runs to 184 residues: Late embryogenesis abundant protein (184 aa).

Residues 49 to 184 (TGNIAEYPTE…KLPGHHNHHP (136 aa)) form a disordered region. The segment covering 60–86 (PPAGVAAGTGAAATTAAGVTTSETTTG) has biased composition (low complexity). Composition is skewed to basic and acidic residues over residues 87 to 98 (QEHHGSLGEHLR) and 122 to 138 (KDKIKDKLGGGKHKDEQ). Residues 139–159 (TPTTATTTGPTTTTTTTGAAA) show a composition bias toward low complexity. Residues 160 to 177 (DQHHEKKGILEKIKEKLP) show a composition bias toward basic and acidic residues.

It belongs to the plant dehydrin family.

Its function is as follows. LEA protein are late embryogenesis abundant in higher plant seed embryos. There are two subsets of LEA proteins (5a, and 5b), the first ones are expressed when the cotyledon weight reach 80 mg and the second set are expressed above 100 mg. The function of those proteins is not known. The sequence is that of Late embryogenesis abundant protein from Raphanus sativus (Radish).